We begin with the raw amino-acid sequence, 298 residues long: 1,2-dihydroxynaphthalene dioxygenase (298 aa).

2 consecutive VOC domains span residues 6–121 and 146–267; these read ELGY…IFYG and GIGH…FGWG. His-149 contributes to the Fe cation binding site. Substrate is bound by residues His-149, 196-197, His-212, and Tyr-253; that span reads QH. His-212 serves as a coordination point for Fe cation. Glu-263 lines the Fe cation pocket.

Belongs to the extradiol ring-cleavage dioxygenase family. In terms of assembly, homooctamer. It depends on Fe(2+) as a cofactor.

The enzyme catalyses naphthalene-1,2-diol + O2 = 2-hydroxychromene-2-carboxylate + H(+). It functions in the pathway aromatic compound metabolism; naphthalene degradation. Involved in the naphthalene and naphthalenesulfonate catabolic pathway. Catalyzes the meta-cleavage of 1,2-dihydroxynaphthalene (1,2-DHN) to yield 2-hydroxychromene-2-carboxylic acid. Can also cleave 1,2,5-trihydroxynaphthalene (1,2,5-THN), 1,2,6-trihydroxynaphthalene (1,2,6-THN), 1,2,7-trihydroxynaphthalene (1,2,7-THN), 2,3-dihydroxybiphenyl, 3,4-dihydroxybiphenyl, catechol, 3-methylcatechol and 4-methylcatechol. The sequence is that of 1,2-dihydroxynaphthalene dioxygenase (nsaC) from Sphingobium xenophagum.